We begin with the raw amino-acid sequence, 185 residues long: Ribosome-recycling factor (185 aa).

Belongs to the RRF family.

It is found in the cytoplasm. Its function is as follows. Responsible for the release of ribosomes from messenger RNA at the termination of protein biosynthesis. May increase the efficiency of translation by recycling ribosomes from one round of translation to another. This chain is Ribosome-recycling factor, found in Legionella pneumophila (strain Paris).